A 255-amino-acid polypeptide reads, in one-letter code: Small ribosomal subunit protein uS2 (255 aa).

The disordered stretch occupies residues 232–255; that stretch reads ASGRDLGASEEVPVEPALEEASEA.

Belongs to the universal ribosomal protein uS2 family.

The polypeptide is Small ribosomal subunit protein uS2 (Sinorhizobium medicae (strain WSM419) (Ensifer medicae)).